The sequence spans 71 residues: Small ribosomal subunit protein bS18 (71 aa).

It belongs to the bacterial ribosomal protein bS18 family. Part of the 30S ribosomal subunit. Forms a tight heterodimer with protein bS6.

Functionally, binds as a heterodimer with protein bS6 to the central domain of the 16S rRNA, where it helps stabilize the platform of the 30S subunit. The sequence is that of Small ribosomal subunit protein bS18 from Microcystis aeruginosa (strain NIES-843 / IAM M-2473).